The following is a 145-amino-acid chain: Basic phospholipase A2 GL1-1 (145 aa).

A signal peptide spans 1 to 21; sequence MYPAHLLVLLAVCVSLLGASA. Positions 22–27 are excised as a propeptide; that stretch reads IPPLPL. 7 cysteine pairs are disulfide-bonded: cysteine 38–cysteine 98, cysteine 54–cysteine 144, cysteine 56–cysteine 72, cysteine 71–cysteine 125, cysteine 78–cysteine 118, cysteine 87–cysteine 111, and cysteine 105–cysteine 116. Ca(2+)-binding residues include tyrosine 55, glycine 57, and glycine 59. Residue histidine 75 is part of the active site. Ca(2+) is bound at residue aspartate 76. Aspartate 119 is an active-site residue.

Belongs to the phospholipase A2 family. Group I subfamily. D49 sub-subfamily. Ca(2+) is required as a cofactor. Expressed by the venom gland.

The protein resides in the secreted. The enzyme catalyses a 1,2-diacyl-sn-glycero-3-phosphocholine + H2O = a 1-acyl-sn-glycero-3-phosphocholine + a fatty acid + H(+). Functionally, PLA2 catalyzes the calcium-dependent hydrolysis of the 2-acyl groups in 3-sn-phosphoglycerides. This is Basic phospholipase A2 GL1-1 from Laticauda semifasciata (Black-banded sea krait).